A 206-amino-acid polypeptide reads, in one-letter code: Histidine biosynthesis bifunctional protein HisIE (206 aa).

Positions 1-117 are phosphoribosyl-AMP cyclohydrolase; the sequence is MGSETTAAGD…SCFPTAPSQF (117 aa). The phosphoribosyl-ATP pyrophosphohydrolase stretch occupies residues 118–206; it reads LGSLDALIAE…AVALLESRHK (89 aa).

This sequence in the N-terminal section; belongs to the PRA-CH family. It in the C-terminal section; belongs to the PRA-PH family.

The protein localises to the cytoplasm. The catalysed reaction is 1-(5-phospho-beta-D-ribosyl)-ATP + H2O = 1-(5-phospho-beta-D-ribosyl)-5'-AMP + diphosphate + H(+). It carries out the reaction 1-(5-phospho-beta-D-ribosyl)-5'-AMP + H2O = 1-(5-phospho-beta-D-ribosyl)-5-[(5-phospho-beta-D-ribosylamino)methylideneamino]imidazole-4-carboxamide. It participates in amino-acid biosynthesis; L-histidine biosynthesis; L-histidine from 5-phospho-alpha-D-ribose 1-diphosphate: step 2/9. Its pathway is amino-acid biosynthesis; L-histidine biosynthesis; L-histidine from 5-phospho-alpha-D-ribose 1-diphosphate: step 3/9. This Xanthomonas campestris pv. campestris (strain ATCC 33913 / DSM 3586 / NCPPB 528 / LMG 568 / P 25) protein is Histidine biosynthesis bifunctional protein HisIE.